Consider the following 593-residue polypeptide: Glucose-6-phosphate 1-dehydrogenase, chloroplastic (593 aa).

Residues 116 to 123 (GASGDLAK) and arginine 150 contribute to the NADP(+) site. An intrachain disulfide couples cysteine 168 to cysteine 176. Lysine 253 serves as a coordination point for NADP(+). Residues lysine 253, 283 to 287 (HYLGK), glutamate 321, and aspartate 340 contribute to the D-glucose 6-phosphate site. Residue histidine 345 is the Proton acceptor of the active site. Lysine 438 contributes to the NADP(+) binding site. 2 residues coordinate D-glucose 6-phosphate: lysine 441 and arginine 446. Residues arginine 451 and arginine 480 each coordinate NADP(+). Glutamine 482 contacts D-glucose 6-phosphate. NADP(+) is bound by residues 488–490 (YLK) and arginine 573.

This sequence belongs to the glucose-6-phosphate dehydrogenase family. As to quaternary structure, homodimer.

The protein resides in the plastid. The protein localises to the chloroplast. It carries out the reaction D-glucose 6-phosphate + NADP(+) = 6-phospho-D-glucono-1,5-lactone + NADPH + H(+). It participates in carbohydrate degradation; pentose phosphate pathway; D-ribulose 5-phosphate from D-glucose 6-phosphate (oxidative stage): step 1/3. With respect to regulation, regulated by metabolites. Post-translationally inactivated by cysteine-mediated redox modification via the ferredoxin-thioredoxin system in the light and this avoids futile cycles with photosynthetic CO2 fixation. Its function is as follows. Catalyzes the rate-limiting step of the oxidative pentose-phosphate pathway, which represents a route for the dissimilation of carbohydrates besides glycolysis. The main function of this enzyme is to provide reducing power (NADPH) and pentose phosphates for fatty acid and nucleic acid synthesis which are involved in membrane synthesis and cell division. This Nicotiana tabacum (Common tobacco) protein is Glucose-6-phosphate 1-dehydrogenase, chloroplastic.